A 236-amino-acid chain; its full sequence is Probable apoptosis inhibitor 2 (236 aa).

A BIR repeat occupies 85–150 (RKRSFASFKW…AHAADCAFRR (66 aa)). Residues C123, C126, H142, and C146 each coordinate Zn(2+). The segment at 189-223 (CKVCFVNEKSVCFLPCRHLVVCAECSPRCKRCCVC) adopts an RING-type zinc-finger fold.

This Orgyia pseudotsugata multicapsid polyhedrosis virus (OpMNPV) protein is Probable apoptosis inhibitor 2 (IAP2).